The chain runs to 162 residues: Regulatory protein RecX (162 aa).

Belongs to the RecX family.

The protein resides in the cytoplasm. Functionally, modulates RecA activity. The polypeptide is Regulatory protein RecX (Pectobacterium atrosepticum (strain SCRI 1043 / ATCC BAA-672) (Erwinia carotovora subsp. atroseptica)).